The following is a 468-amino-acid chain: ATP synthase subunit beta (468 aa).

Gly155 to Thr162 lines the ATP pocket.

The protein belongs to the ATPase alpha/beta chains family. F-type ATPases have 2 components, CF(1) - the catalytic core - and CF(0) - the membrane proton channel. CF(1) has five subunits: alpha(3), beta(3), gamma(1), delta(1), epsilon(1). CF(0) has three main subunits: a(1), b(2) and c(9-12). The alpha and beta chains form an alternating ring which encloses part of the gamma chain. CF(1) is attached to CF(0) by a central stalk formed by the gamma and epsilon chains, while a peripheral stalk is formed by the delta and b chains.

It is found in the cell membrane. It carries out the reaction ATP + H2O + 4 H(+)(in) = ADP + phosphate + 5 H(+)(out). Its function is as follows. Produces ATP from ADP in the presence of a proton gradient across the membrane. The catalytic sites are hosted primarily by the beta subunits. This Bacillus cereus (strain ATCC 10987 / NRS 248) protein is ATP synthase subunit beta.